A 348-amino-acid polypeptide reads, in one-letter code: Sec-independent protein translocase protein TatC (348 aa).

The next 6 membrane-spanning stretches (helical) occupy residues 7-27 (LCLTVSTILCAGFASNLMDIL), 162-182 (VVISFPLLLYFLLQFIIPGLL), 192-212 (CMAVGFGLFLAGTLFCYFIVL), 244-264 (MILMFGLAFELPVVVMPFVKL), 278-298 (YAIVAIAVLAAVITPTPDVAT), and 299-319 (MMLMAVPMYALYEICIILAWM).

It belongs to the TatC family. In terms of assembly, forms a complex with TatA.

It is found in the cell membrane. Part of the twin-arginine translocation (Tat) system that transports large folded proteins containing a characteristic twin-arginine motif in their signal peptide across membranes. The chain is Sec-independent protein translocase protein TatC from Akkermansia muciniphila (strain ATCC BAA-835 / DSM 22959 / JCM 33894 / BCRC 81048 / CCUG 64013 / CIP 107961 / Muc).